Consider the following 124-residue polypeptide: Large ribosomal subunit protein bL19 (124 aa).

The protein belongs to the bacterial ribosomal protein bL19 family.

This protein is located at the 30S-50S ribosomal subunit interface and may play a role in the structure and function of the aminoacyl-tRNA binding site. The sequence is that of Large ribosomal subunit protein bL19 from Acidiphilium cryptum (strain JF-5).